The sequence spans 66 residues: UPF0370 protein YpfN (66 aa).

A helical membrane pass occupies residues 4–24; the sequence is LAKYWWILVLVFLVGVLLNVI. The tract at residues 39 to 66 is disordered; sequence KPELPPHRDFNDKWDDEDGWPKKDQPKK. The segment covering 42-66 has biased composition (basic and acidic residues); that stretch reads LPPHRDFNDKWDDEDGWPKKDQPKK.

It belongs to the UPF0370 family.

The protein resides in the cell membrane. In Salmonella paratyphi B (strain ATCC BAA-1250 / SPB7), this protein is UPF0370 protein YpfN.